We begin with the raw amino-acid sequence, 58 residues long: Ribosome biogenesis protein Nop10 (58 aa).

The protein belongs to the NOP10 family.

Its function is as follows. Involved in ribosome biogenesis; more specifically in 18S rRNA pseudouridylation and in cleavage of pre-rRNA. This chain is Ribosome biogenesis protein Nop10, found in Methanobrevibacter smithii (strain ATCC 35061 / DSM 861 / OCM 144 / PS).